A 597-amino-acid polypeptide reads, in one-letter code: Protein Spindly (597 aa).

Residue Met1 is modified to N-acetylmethionine. A coiled-coil region spans residues 1 to 445; it reads MEADITNLRN…LKLKYEPEER (445 aa). A phosphoserine mark is found at Ser508 and Ser547. Residues 531 to 597 are disordered; it reads PASTEVLHEQ…STPEMQCPQQ (67 aa). The span at 540–549 shows a compositional bias: polar residues; it reads QSGNTPSSPR. The segment covering 550–574 has biased composition (basic and acidic residues); it reads LTEESRLPTKVKERKEATSKLEKGA. The span at 583 to 597 shows a compositional bias: polar residues; the sequence is YVSSKSTPEMQCPQQ.

It belongs to the Spindly family. Interacts with KNTC1 and ZW10. These interactions appear weak and may be transient or indirect. Interacts with dynein intermediate chain and dynactin (DCTN1). Interacts with the catalytically active form of USP45. Monoubiquitinated with'Lys-48' linkage. Deubiquitinated by USP45.

Its subcellular location is the cytoplasm. The protein resides in the cytoskeleton. It is found in the microtubule organizing center. The protein localises to the centrosome. It localises to the chromosome. Its subcellular location is the centromere. The protein resides in the kinetochore. It is found in the nucleus. The protein localises to the spindle pole. Its function is as follows. Required for the localization of dynein and dynactin to the mitotic kintochore. Dynein is believed to control the initial lateral interaction between the kinetochore and spindle microtubules and to facilitate the subsequent formation of end-on kinetochore-microtubule attachments mediated by the NDC80 complex. Also required for correct spindle orientation. Does not appear to be required for the removal of spindle assembly checkpoint (SAC) proteins from the kinetochore upon bipolar spindle attachment. Acts as an adapter protein linking the dynein motor complex to various cargos and converts dynein from a non-processive to a highly processive motor in the presence of dynactin. Facilitates the interaction between dynein and dynactin and activates dynein processivity (the ability to move along a microtubule for a long distance without falling off the track). Plays a role in cell migration. The sequence is that of Protein Spindly (Spdl1) from Rattus norvegicus (Rat).